The primary structure comprises 859 residues: MNGLCCCTPCKPRYRRLVDSIYPRAVTDGLLHSNMQKLTFYAISHPEKLERIGEYLVMRMVRDLNRQRPVQVKIAVEAMDQLLQACHSSPSLPQFSENHLRMVQRLLESNNAKMEQLATDSFVTFSNIEESSPSYHRQYDFFIDKFSQMCHANPQAAYGEDFRLARCAGLRGLRGVVWKSVTDDLHPNIWEQQHMDKIVPSILFNLQEPDDNGGFSSSHIPKFDNNFTDSTQSHRGDDEATPKVLSDRCLRELMGKASFGSLRAVIEPVLKHMDLHKRWSPPPSFAIHVFRAIIYSIQSQNSYFVIQELINHLDSMCSADASTRIGIATVLSSIVSIAGTSIGPLLLSIFNSLLKHLRTSVDFERSGKCSDQPAEKMYQEALINAMGDFANALPDYQKVEMMMFTVGNIPNLDERKSKQGEEFLQHVLVKTLLKVATKYRTAYLATVFTDSFLDTLLRLALVRDPQVRLATQQIFHTLLDRHDNAANLVHLGYELDVADVQLTVEKCSRADQMFMRKHIGDITYMLWRAAAAADETDLSTHADAILCTMSLLCIESLVELFRLSMALQQLALDTKQNFSDAKRNSIHNIVAKYMNLSAQLIANPSLCQQVQHVVGCRAQRGIPGLNLLLSVKESPMNDDPLSSTAVNGTIPEGTPRTITEGDHALLFNIEDVAESLKASGKDASRLFVPFNMSLNGRDGNGDSWQREDGQNFDSTDGRESPDGYKTVGIDDVSVDMSVDWTPPISRKQSRRNTIFSIVNPPKLNASTVDDLKAYANASFDPIEEDRKEKELTGSILSEIRNTDFEERVNTNESLNERGDLSKSIARLLVRNGETTKVRDIGRPTKPKNVFEIELPSFAY.

Disordered regions lie at residues D638–T657 and R697–Y724. The span at W704–D722 shows a compositional bias: basic and acidic residues.

This sequence belongs to the EFR3 family.

This chain is Protein EFR3 homolog, found in Caenorhabditis briggsae.